The sequence spans 329 residues: Aurora kinase B (329 aa).

Positions Met1–Leu14 are enriched in basic residues. A disordered region spans residues Met1 to Val21. One can recognise a Protein kinase domain in the interval Phe53–Val305. Residues Leu59–Val67 and Lys82 contribute to the ATP site. The active-site Proton acceptor is Asp178.

The protein belongs to the protein kinase superfamily. Ser/Thr protein kinase family. Aurora subfamily. As to quaternary structure, interacts with Incenp and Cdc37. Mg(2+) serves as cofactor.

It is found in the chromosome. The protein resides in the cytoplasm. Its subcellular location is the cytoskeleton. The protein localises to the midbody. It catalyses the reaction L-seryl-[protein] + ATP = O-phospho-L-seryl-[protein] + ADP + H(+). The catalysed reaction is L-threonyl-[protein] + ATP = O-phospho-L-threonyl-[protein] + ADP + H(+). Serine/threonine-protein kinase that mediates both meiotic and mitotic chromosome segregation. Required for histone H3 'Ser-10' phosphorylation. Phosphorylates mei-S332 within residues 124-126 and stabilizes its association with centromeres during meiosis. May regulate the function of the ESCRT-III complex core component shrb during abscission of germline cells in oogenesis. The polypeptide is Aurora kinase B (Drosophila melanogaster (Fruit fly)).